Here is a 207-residue protein sequence, read N- to C-terminus: Uridine kinase (207 aa).

ATP is bound at residue glycine 11–threonine 18.

This sequence belongs to the uridine kinase family.

It is found in the cytoplasm. It carries out the reaction uridine + ATP = UMP + ADP + H(+). The catalysed reaction is cytidine + ATP = CMP + ADP + H(+). The protein operates within pyrimidine metabolism; CTP biosynthesis via salvage pathway; CTP from cytidine: step 1/3. It functions in the pathway pyrimidine metabolism; UMP biosynthesis via salvage pathway; UMP from uridine: step 1/1. In Staphylococcus epidermidis (strain ATCC 35984 / DSM 28319 / BCRC 17069 / CCUG 31568 / BM 3577 / RP62A), this protein is Uridine kinase.